A 95-amino-acid polypeptide reads, in one-letter code: UPF0235 protein A2cp1_1215 (95 aa).

Belongs to the UPF0235 family.

The chain is UPF0235 protein A2cp1_1215 from Anaeromyxobacter dehalogenans (strain 2CP-1 / ATCC BAA-258).